The primary structure comprises 337 residues: Hsp90 co-chaperone Cdc37-like 1 (337 aa).

Residues 1-11 (MEQPWPPPGPW) are compositionally biased toward pro residues. The segment at 1-43 (MEQPWPPPGPWSLPRAEGEAEEESDLDLSPGSPRCPQLPGGGT) is disordered. The segment at 2-171 (EQPWPPPGPW…HEQKIRHFGM (170 aa)) is self-association. A phosphoserine mark is found at serine 32 and serine 88. A coiled-coil region spans residues 84 to 122 (HNSESLDQEHAKAQTAISELRQREEEWRQKEEALVQRER). Positions 147–277 (KETEDEDKSK…SRVRLYSQSP (131 aa)) are self-association and interaction with Hsp90. Residues 267–337 (KSRVRLYSQS…DDEPKMMDTV (71 aa)) form an interaction with Hsp70 region. A required for interaction with STIP1 region spans residues 278 to 337 (NFQPVTVQNHVPHSGVGSIGLLESLPQNPDYLQYSINTALCSLNSVVHKEDDEPKMMDTV).

The protein belongs to the CDC37 family. As to quaternary structure, self-associates. Forms complexes with Hsp70 and Hsp90. Interacts with CDC37, FKBP4, PPID and STIP1.

It is found in the cytoplasm. In terms of biological role, co-chaperone that binds to numerous proteins and promotes their interaction with Hsp70 and Hsp90. This is Hsp90 co-chaperone Cdc37-like 1 (CDC37L1) from Bos taurus (Bovine).